We begin with the raw amino-acid sequence, 153 residues long: MVVKAVCVINGDAKGTVFFEQESSETPVKVSGEVCGLAKGLHGFHVHEFGDNTNGCMSSGPHFNPYGKEHGAPVDENRHLGDLGNIEATGDCPTKVSITDSKITLFGADSIIGRTVVVHADADDLGKGGHELSKSTGNAGARIGCGVIGIAKV.

Positions 45, 47, and 62 each coordinate Cu cation. The cysteines at positions 56 and 145 are disulfide-linked. Zn(2+)-binding residues include His62, His70, His79, and Asp82. Cu cation is bound at residue His119.

Belongs to the Cu-Zn superoxide dismutase family. In terms of assembly, homodimer. Cu cation serves as cofactor. It depends on Zn(2+) as a cofactor.

The protein resides in the cytoplasm. It carries out the reaction 2 superoxide + 2 H(+) = H2O2 + O2. Destroys radicals which are normally produced within the cells and which are toxic to biological systems. This is Superoxide dismutase [Cu-Zn] from Drosophila yakuba (Fruit fly).